A 531-amino-acid polypeptide reads, in one-letter code: Protein SHORT-ROOT (531 aa).

A compositionally biased stretch (low complexity) spans Q14–T39. 2 disordered regions span residues Q14 to A40 and S65 to T103. A compositionally biased stretch (polar residues) spans T81–H93. The segment covering P94–T103 has biased composition (low complexity). One can recognise a GRAS domain in the interval F134 to R529. The leucine repeat I (LRI) stretch occupies residues K141–M206. Residues V225–T290 are VHIID. Residues I256–D260 carry the VHIID motif. The interval E310 to N343 is leucine repeat II (LRII). The PFYRE stretch occupies residues L353–D449. Positions A452–R529 are SAW.

It belongs to the GRAS family. As to quaternary structure, interacts with SCR, SCL23, JKD and MGP. Interacts with SIEL. Association to endosomes and intercellular movement of SHR rely on the interaction with SIEL. As to expression, expressed in the stele and the quiescent center. Not detected in the ground tissue cell lineage. The SHR protein moves from the stele to a single layer of adjacent cells, where it enters the nucleus.

It is found in the cytoplasm. Its subcellular location is the nucleus. It localises to the early endosome. The protein localises to the late endosome. The protein resides in the recycling endosome. In terms of biological role, transcription factor required for quiescent center cells specification and maintenance of surrounding stem cells, and for the asymmetric cell division involved in radial pattern formation in roots. Essential for both cell division and cell specification. Regulates the radial organization of the shoot axial organs and is required for normal shoot gravitropism. Directly controls the transcription of SCR, and when associated with SCR, of MGP, RLK, TRI, NUC and SCL3. This chain is Protein SHORT-ROOT, found in Arabidopsis thaliana (Mouse-ear cress).